A 160-amino-acid polypeptide reads, in one-letter code: UPF0178 protein BB1267 (160 aa).

This sequence belongs to the UPF0178 family.

The chain is UPF0178 protein BB1267 from Bordetella bronchiseptica (strain ATCC BAA-588 / NCTC 13252 / RB50) (Alcaligenes bronchisepticus).